Consider the following 397-residue polypeptide: Cytochrome b (397 aa).

A run of 4 helical transmembrane segments spans residues 38 to 58 (FGSLAGICLVIQIVTGVFLAM), 82 to 104 (WLLRYMHANGASMFFIVVYLHIF), 119 to 139 (VWCLGVVIFLLMIVTAFIGYV), and 185 to 205 (FFSLHYLLPFILVGASLLHLA). The heme b site is built by H88 and H102. Heme b is bound by residues H189 and H203. H208 provides a ligand contact to a ubiquinone. The next 4 membrane-spanning stretches (helical) occupy residues 231–251 (FYVKDLVGWVAFAIFFSIWIF), 295–315 (AGGVAAIALVFISLLALPFFK), 327–347 (IYQGIFWLLLADCLLLGWIGC), and 354–373 (FVTIGQISSFFFFLFFAITP).

It belongs to the cytochrome b family. The main subunits of complex b-c1 are: cytochrome b, cytochrome c1 and the Rieske protein. Heme b is required as a cofactor.

The protein localises to the mitochondrion inner membrane. Functionally, component of the ubiquinol-cytochrome c reductase complex (complex III or cytochrome b-c1 complex) that is part of the mitochondrial respiratory chain. The b-c1 complex mediates electron transfer from ubiquinol to cytochrome c. Contributes to the generation of a proton gradient across the mitochondrial membrane that is then used for ATP synthesis. The polypeptide is Cytochrome b (MT-CYB) (Oryza sativa subsp. indica (Rice)).